The chain runs to 310 residues: 4-hydroxy-3-methylbut-2-enyl diphosphate reductase (310 aa).

C12 contacts [4Fe-4S] cluster. (2E)-4-hydroxy-3-methylbut-2-enyl diphosphate-binding residues include H41 and H74. H41 and H74 together coordinate dimethylallyl diphosphate. Isopentenyl diphosphate contacts are provided by H41 and H74. A [4Fe-4S] cluster-binding site is contributed by C96. Residue H124 coordinates (2E)-4-hydroxy-3-methylbut-2-enyl diphosphate. H124 is a dimethylallyl diphosphate binding site. H124 serves as a coordination point for isopentenyl diphosphate. E126 functions as the Proton donor in the catalytic mechanism. Residue T167 coordinates (2E)-4-hydroxy-3-methylbut-2-enyl diphosphate. Residue C197 participates in [4Fe-4S] cluster binding. The (2E)-4-hydroxy-3-methylbut-2-enyl diphosphate site is built by S225, S226, N227, and S269. S225, S226, N227, and S269 together coordinate dimethylallyl diphosphate. Positions 225, 226, 227, and 269 each coordinate isopentenyl diphosphate.

This sequence belongs to the IspH family. It depends on [4Fe-4S] cluster as a cofactor.

It catalyses the reaction isopentenyl diphosphate + 2 oxidized [2Fe-2S]-[ferredoxin] + H2O = (2E)-4-hydroxy-3-methylbut-2-enyl diphosphate + 2 reduced [2Fe-2S]-[ferredoxin] + 2 H(+). The catalysed reaction is dimethylallyl diphosphate + 2 oxidized [2Fe-2S]-[ferredoxin] + H2O = (2E)-4-hydroxy-3-methylbut-2-enyl diphosphate + 2 reduced [2Fe-2S]-[ferredoxin] + 2 H(+). The protein operates within isoprenoid biosynthesis; dimethylallyl diphosphate biosynthesis; dimethylallyl diphosphate from (2E)-4-hydroxy-3-methylbutenyl diphosphate: step 1/1. It functions in the pathway isoprenoid biosynthesis; isopentenyl diphosphate biosynthesis via DXP pathway; isopentenyl diphosphate from 1-deoxy-D-xylulose 5-phosphate: step 6/6. Its function is as follows. Catalyzes the conversion of 1-hydroxy-2-methyl-2-(E)-butenyl 4-diphosphate (HMBPP) into a mixture of isopentenyl diphosphate (IPP) and dimethylallyl diphosphate (DMAPP). Acts in the terminal step of the DOXP/MEP pathway for isoprenoid precursor biosynthesis. This chain is 4-hydroxy-3-methylbut-2-enyl diphosphate reductase, found in Tolumonas auensis (strain DSM 9187 / NBRC 110442 / TA 4).